Consider the following 50-residue polypeptide: Large ribosomal subunit protein eL39 (50 aa).

The protein belongs to the eukaryotic ribosomal protein eL39 family.

The sequence is that of Large ribosomal subunit protein eL39 from Methanosphaerula palustris (strain ATCC BAA-1556 / DSM 19958 / E1-9c).